The following is a 408-amino-acid chain: Phosphoglycerate kinase (408 aa).

Residues 22–24 (DIN), arginine 39, 60–63 (HQSR), arginine 117, and arginine 157 each bind substrate. ATP-binding positions include glutamate 332 and 358-361 (GGHT).

The protein belongs to the phosphoglycerate kinase family. As to quaternary structure, monomer.

It is found in the cytoplasm. The catalysed reaction is (2R)-3-phosphoglycerate + ATP = (2R)-3-phospho-glyceroyl phosphate + ADP. The protein operates within carbohydrate degradation; glycolysis; pyruvate from D-glyceraldehyde 3-phosphate: step 2/5. This chain is Phosphoglycerate kinase, found in Thermoplasma volcanium (strain ATCC 51530 / DSM 4299 / JCM 9571 / NBRC 15438 / GSS1).